The sequence spans 581 residues: Metal transporter Nramp7.1 (581 aa).

Asparagine 11 and asparagine 19 each carry an N-linked (GlcNAc...) asparagine glycan. Helical transmembrane passes span 57–77, 90–110, 146–166, 181–201, 224–244, 270–290, and 307–327; these read FLSY…PGNL, ELLW…SLAA, YCLW…EGII, LLIG…WVGV, LLIA…MSYV, IALL…ALVL, and YFLI…LAVI. Asparagine 338 carries an N-linked (GlcNAc...) asparagine glycan. 5 helical membrane passes run 370-390, 409-429, 434-454, 473-493, and 513-533; these read IYAI…TYAG, LVTR…GGSS, LIII…FALI, IYII…NIYY, and VFIG…VIYL. Residues 551–581 are disordered; that stretch reads PQQQANMENGLGPEMERVPYREDLADIPLPE. Positions 564 to 574 are enriched in basic and acidic residues; the sequence is EMERVPYREDL.

This sequence belongs to the NRAMP (TC 2.A.55) family.

Its subcellular location is the membrane. Probable divalent metal transporter. This chain is Metal transporter Nramp7.1, found in Populus trichocarpa (Western balsam poplar).